A 476-amino-acid chain; its full sequence is Glycogen synthase (476 aa).

An ADP-alpha-D-glucose-binding site is contributed by Lys-15.

This sequence belongs to the glycosyltransferase 1 family. Bacterial/plant glycogen synthase subfamily.

It carries out the reaction [(1-&gt;4)-alpha-D-glucosyl](n) + ADP-alpha-D-glucose = [(1-&gt;4)-alpha-D-glucosyl](n+1) + ADP + H(+). It functions in the pathway glycan biosynthesis; glycogen biosynthesis. In terms of biological role, synthesizes alpha-1,4-glucan chains using ADP-glucose. The chain is Glycogen synthase from Streptococcus agalactiae serotype III (strain NEM316).